The following is a 488-amino-acid chain: E3 ubiquitin-protein ligase TRIM34 (488 aa).

The RING-type zinc finger occupies C15–G60. Residues K92–E134 form a B box-type zinc finger. The Zn(2+) site is built by C97, H100, C119, and H125. The stretch at V131 to C239 forms a coiled coil. The 206-residue stretch at L283–S488 folds into the B30.2/SPRY domain.

Belongs to the TRIM/RBCC family. Homotrimer. Interacts (via B-box and SPRY domain) with TRIM5. As to quaternary structure, (Microbial infection) Interacts (via the B30.2/SPRY domain) with HIV-1 capsid complexes. Is the most abundant form. It is highly expressed in the placenta, spleen, colon and peripheral blood leukocytes.

The protein resides in the cytoplasm. Its subcellular location is the mitochondrion. It carries out the reaction S-ubiquitinyl-[E2 ubiquitin-conjugating enzyme]-L-cysteine + [acceptor protein]-L-lysine = [E2 ubiquitin-conjugating enzyme]-L-cysteine + N(6)-ubiquitinyl-[acceptor protein]-L-lysine.. It participates in protein modification; protein ubiquitination. Its function is as follows. Functions as antiviral protein and contributes to the defense against retroviral infections. Acts as a capsid-specific restriction factor with the help of TRIM5 and prevents infection from non-host-adapted retroviruses. During influenza A virus infection, promotes programmed cell death by targeting ZBP1 for 'Lys-63'-linked polyubiquitination. In turn, promotes ZBP1 recruitment of RIPK3 to mediate virus-induced programmed necrosis. Negatively regulates the function of mitochondria by enhancing mitochondrial depolarization leading to cytochrome c release and mitochondria-dependent apoptosis. Also promotes the formation of multinucleated giant cells by means of cell fusion and phagocytosis in epithelial cells. This chain is E3 ubiquitin-protein ligase TRIM34 (TRIM34), found in Homo sapiens (Human).